The chain runs to 100 residues: Urease subunit gamma (100 aa).

Belongs to the urease gamma subunit family. As to quaternary structure, heterotrimer of UreA (gamma), UreB (beta) and UreC (alpha) subunits. Three heterotrimers associate to form the active enzyme.

Its subcellular location is the cytoplasm. It catalyses the reaction urea + 2 H2O + H(+) = hydrogencarbonate + 2 NH4(+). It participates in nitrogen metabolism; urea degradation; CO(2) and NH(3) from urea (urease route): step 1/1. The chain is Urease subunit gamma from Shewanella halifaxensis (strain HAW-EB4).